Reading from the N-terminus, the 531-residue chain is MGKKVAIIGAGISGLASIRSCLEEGLEPTCFEMSDDIGGLWKFSDHAEEGRASIYQSVFTNSSKEMMCFPDFPFPDDFPNFMHNSKLQEYITTFAREKNLLKYIQFKTLVSSIKKHPDFSVTGQWYVSTERNGKKETAVFDAVMICSGHHVYPNLPKDSFPGLKHFKGKSFHSREYKEPGIFKGKRVLVIGLGNSGCDIATELSHTAEQVVISSRSGSWVMSRVWDDGYPWDMLYVTRFQTFLKNNLPTAISDWWYVKQMNAKFKHENYSLMPLNGTLRKEPVFNDDLPARILCGTVSIKPNVKEFTETSAIFEDGTVFEAIDSVIFATGYGYAYPFLDDSIIKSENNKVTLFKGIFPPQLEKPTMAVIGLVQSLGAAIPTTDLQARWAAQVIKGTCTLPPVKDMMNDIHEKMGTKLKWFGKSETIQTDYINYMDELASFIGVKLNIPWLFLTDPRLALEVFFGPCSPYQFRLVGPGKWPGARQAILTQWDRSLKPMKTRAVGHLQKPALFSPWLKLLAIAVLLIAAVLVF.

FAD-binding positions include 9-13 (GAGIS), glutamate 32, 40-41 (LW), and 61-62 (NS). NADP(+)-binding positions include 60–61 (TN) and 195–198 (SGCD). Residues 511 to 531 (FSPWLKLLAIAVLLIAAVLVF) form a helical membrane-spanning segment.

Belongs to the FMO family. Requires FAD as cofactor. As to expression, liver.

It is found in the microsome membrane. The protein resides in the endoplasmic reticulum membrane. The enzyme catalyses trimethylamine + NADPH + O2 = trimethylamine N-oxide + NADP(+) + H2O. It catalyses the reaction N,N-dimethylaniline + NADPH + O2 + H(+) = N,N-dimethylaniline N-oxide + NADP(+) + H2O. It carries out the reaction hypotaurine + NADPH + O2 + H(+) = taurine + NADP(+) + H2O. The catalysed reaction is (S)-nicotine + NADPH + O2 = trans-(S)-nicotine N(1')-oxide + NADP(+) + H2O. The enzyme catalyses albendazole + NADPH + O2 + H(+) = albendazole S-oxide + NADP(+) + H2O. Its function is as follows. Essential hepatic enzyme that catalyzes the oxygenation of a wide variety of nitrogen- and sulfur-containing compounds including drugs as well as dietary compounds. Plays an important role in the metabolism of trimethylamine (TMA), via the production of trimethylamine N-oxide (TMAO) metabolite. TMA is generated by the action of gut microbiota using dietary precursors such as choline, choline containing compounds, betaine or L-carnitine. By regulating TMAO concentration, FMO3 directly impacts both platelet responsiveness and rate of thrombus formation. The polypeptide is Flavin-containing monooxygenase 3 (FMO3) (Oryctolagus cuniculus (Rabbit)).